The following is a 153-amino-acid chain: 3-hydroxyacyl-[acyl-carrier-protein] dehydratase FabZ (153 aa).

Histidine 47 is a catalytic residue.

It belongs to the thioester dehydratase family. FabZ subfamily.

The protein resides in the cytoplasm. The catalysed reaction is a (3R)-hydroxyacyl-[ACP] = a (2E)-enoyl-[ACP] + H2O. Involved in unsaturated fatty acids biosynthesis. Catalyzes the dehydration of short chain beta-hydroxyacyl-ACPs and long chain saturated and unsaturated beta-hydroxyacyl-ACPs. The sequence is that of 3-hydroxyacyl-[acyl-carrier-protein] dehydratase FabZ from Myxococcus xanthus (strain DK1622).